The chain runs to 535 residues: Beta-glucosidase 47 (535 aa).

The N-terminal stretch at 1 to 38 (MKKSIVYEIMETKSSMYLSQFRLWLCFIITTLVSLSSS) is a signal peptide. Residue Gln-73 coordinates a beta-D-glucoside. The N-linked (GlcNAc...) asparagine glycan is linked to Asn-93. Residues His-175 and 220-221 (NE) each bind a beta-D-glucoside. Glu-221 (proton donor) is an active-site residue. A disulfide bond links Cys-240 and Cys-247. Asn-246 carries an N-linked (GlcNAc...) asparagine glycan. Tyr-363 provides a ligand contact to a beta-D-glucoside. Cysteines 371 and 376 form a disulfide. N-linked (GlcNAc...) asparagine glycosylation is present at Asn-419. An a beta-D-glucoside-binding site is contributed by Glu-426. Glu-426 acts as the Nucleophile in catalysis. Residue Asn-432 is glycosylated (N-linked (GlcNAc...) asparagine). A beta-D-glucoside-binding positions include Trp-470, 477-478 (EW), and Phe-486.

The protein belongs to the glycosyl hydrolase 1 family.

It carries out the reaction Hydrolysis of terminal, non-reducing beta-D-glucosyl residues with release of beta-D-glucose.. In Arabidopsis thaliana (Mouse-ear cress), this protein is Beta-glucosidase 47.